Consider the following 225-residue polypeptide: 2-C-methyl-D-erythritol 4-phosphate cytidylyltransferase (225 aa).

Belongs to the IspD/TarI cytidylyltransferase family. IspD subfamily.

It carries out the reaction 2-C-methyl-D-erythritol 4-phosphate + CTP + H(+) = 4-CDP-2-C-methyl-D-erythritol + diphosphate. It participates in isoprenoid biosynthesis; isopentenyl diphosphate biosynthesis via DXP pathway; isopentenyl diphosphate from 1-deoxy-D-xylulose 5-phosphate: step 2/6. Catalyzes the formation of 4-diphosphocytidyl-2-C-methyl-D-erythritol from CTP and 2-C-methyl-D-erythritol 4-phosphate (MEP). This chain is 2-C-methyl-D-erythritol 4-phosphate cytidylyltransferase, found in Clostridium perfringens (strain SM101 / Type A).